A 1075-amino-acid chain; its full sequence is DNA-directed RNA polymerase subunit beta (1075 aa).

The protein belongs to the RNA polymerase beta chain family. As to quaternary structure, in plastids the minimal PEP RNA polymerase catalytic core is composed of four subunits: alpha, beta, beta', and beta''. When a (nuclear-encoded) sigma factor is associated with the core the holoenzyme is formed, which can initiate transcription.

The protein resides in the plastid. Its subcellular location is the chloroplast. The catalysed reaction is RNA(n) + a ribonucleoside 5'-triphosphate = RNA(n+1) + diphosphate. DNA-dependent RNA polymerase catalyzes the transcription of DNA into RNA using the four ribonucleoside triphosphates as substrates. This chain is DNA-directed RNA polymerase subunit beta, found in Oryza sativa (Rice).